The chain runs to 567 residues: Periplasmic [NiFe] hydrogenase large subunit (567 aa).

E62 lines the Mg(2+) pocket. Positions 81 and 84 each coordinate Ni(2+). C84 contributes to the Fe cation binding site. A Mg(2+)-binding site is contributed by L498. Residues C546 and C549 each coordinate Ni(2+). C549 is a binding site for Fe cation. Residue H552 coordinates Mg(2+). Residues 553 to 567 (VIDGHTNEVHKFRIL) constitute a propeptide that is removed on maturation.

Belongs to the [NiFe]/[NiFeSe] hydrogenase large subunit family. Heterodimer of a large and a small subunit. Requires Ni(2+) as cofactor. Fe cation is required as a cofactor.

It is found in the periplasm. The enzyme catalyses 2 Fe(III)-[cytochrome c3] + H2 = 2 Fe(II)-[cytochrome c3] + 2 H(+). Its function is as follows. Catalyzes the reversible oxidoreduction of molecular hydrogen, in conjunction with a specific electron acceptor, cytochrome c3. The sequence is that of Periplasmic [NiFe] hydrogenase large subunit (hydB) from Nitratidesulfovibrio vulgaris (strain DSM 19637 / Miyazaki F) (Desulfovibrio vulgaris).